We begin with the raw amino-acid sequence, 191 residues long: Ribosomal RNA small subunit methyltransferase G (191 aa).

Residues glycine 62, phenylalanine 67, 111–112 (IE), and arginine 124 contribute to the S-adenosyl-L-methionine site.

It belongs to the methyltransferase superfamily. RNA methyltransferase RsmG family.

The protein localises to the cytoplasm. The catalysed reaction is guanosine(527) in 16S rRNA + S-adenosyl-L-methionine = N(7)-methylguanosine(527) in 16S rRNA + S-adenosyl-L-homocysteine. Its function is as follows. Specifically methylates the N7 position of guanine in position 527 of 16S rRNA. The polypeptide is Ribosomal RNA small subunit methyltransferase G (Rickettsia typhi (strain ATCC VR-144 / Wilmington)).